A 338-amino-acid chain; its full sequence is Inorganic pyrophosphatase (338 aa).

Arg129 contacts diphosphate. Mg(2+) is bound by residues Asp166, Asp171, and Asp203.

This sequence belongs to the PPase family. As to quaternary structure, component of the NURF complex composed of Caf1-55, E(bx), Nurf-38 and Iswi. Mg(2+) serves as cofactor.

Its subcellular location is the cytoplasm. The protein resides in the nucleus. The catalysed reaction is diphosphate + H2O = 2 phosphate + H(+). Component of NURF (nucleosome remodeling factor), a complex which catalyzes ATP-dependent nucleosome sliding and facilitates transcription of chromatin. NURF is required for homeotic gene expression, proper larval blood cell development, normal male X chromosome morphology, ecdysteroid signaling and metamorphosis. Inorganic pyrophosphatase (PPase), hydrolyzes inorganic pyrophosphate to inorganic phosphate, essential for driving critical biosynthetic reactions including transcription, replication, and DNA repair. The chain is Inorganic pyrophosphatase (Nurf-38) from Drosophila melanogaster (Fruit fly).